Consider the following 352-residue polypeptide: Protein RecA (352 aa).

Residue 64 to 71 (GPESSGKT) coordinates ATP. Residues 328-352 (NPSSVPEAEAEHDPEQDEEPTFDLE) form a disordered region. Positions 335–352 (AEAEHDPEQDEEPTFDLE) are enriched in acidic residues.

The protein belongs to the RecA family.

The protein resides in the cytoplasm. Functionally, can catalyze the hydrolysis of ATP in the presence of single-stranded DNA, the ATP-dependent uptake of single-stranded DNA by duplex DNA, and the ATP-dependent hybridization of homologous single-stranded DNAs. It interacts with LexA causing its activation and leading to its autocatalytic cleavage. This chain is Protein RecA, found in Brevibacillus brevis (strain 47 / JCM 6285 / NBRC 100599).